The following is a 246-amino-acid chain: Triosephosphate isomerase (246 aa).

Asn-9–Lys-11 serves as a coordination point for substrate. His-99 serves as the catalytic Electrophile. Glu-168 functions as the Proton acceptor in the catalytic mechanism. Residues Gly-174, Ser-207, and Gly-228–Gly-229 contribute to the substrate site.

The protein belongs to the triosephosphate isomerase family. In terms of assembly, homodimer.

It is found in the cytoplasm. It carries out the reaction D-glyceraldehyde 3-phosphate = dihydroxyacetone phosphate. The protein operates within carbohydrate biosynthesis; gluconeogenesis. Its pathway is carbohydrate degradation; glycolysis; D-glyceraldehyde 3-phosphate from glycerone phosphate: step 1/1. In terms of biological role, involved in the gluconeogenesis. Catalyzes stereospecifically the conversion of dihydroxyacetone phosphate (DHAP) to D-glyceraldehyde-3-phosphate (G3P). This is Triosephosphate isomerase from Prochlorococcus marinus (strain NATL1A).